The following is a 3946-amino-acid chain: Hybrid PKS-NRPS synthetase lepA (3946 aa).

The Ketosynthase family 3 (KS3) domain maps to 9 to 440; sequence VEPIAIVGSA…GTNAHVILEG (432 aa). Residues C183, H320, and H363 each act as for beta-ketoacyl synthase activity in the active site. Residues 553-871 form a malonyl-CoA:ACP transacylase (MAT) domain region; it reads IFTGQGAQWA…PYAGIMRRAT (319 aa). The tract at residues 945–1073 is N-terminal hotdog fold; that stretch reads HELLGRRAPD…GRLILFKGEG (129 aa). The segment at 945-1238 is dehydratase (DH) domain; the sequence is HELLGRRAPD…RLQSFTEAKA (294 aa). One can recognise a PKS/mFAS DH domain in the interval 945-1239; it reads HELLGRRAPD…LQSFTEAKAL (295 aa). Residue H977 is the Proton acceptor; for dehydratase activity of the active site. Residues 1088–1239 are C-terminal hotdog fold; that stretch reads LSPLDREMFY…LQSFTEAKAL (152 aa). The active-site Proton donor; for dehydratase activity is D1147. Residues 1380 to 1580 form a methyltransferase (MT) domain region; sequence LLNRFYTDGR…ATVSDLPSDG (201 aa). Positions 2093 to 2266 are ketoreductase (KR) domain; it reads TYWMIGLNSE…AASVIDIGLV (174 aa). A compositionally biased stretch (low complexity) spans 2352–2365; sequence SSQDSDQSNSTSAS. The tract at residues 2352 to 2372 is disordered; that stretch reads SSQDSDQSNSTSASIRDQVSS. The 78-residue stretch at 2378–2455 folds into the Carrier 1 domain; the sequence is EGTDVLLRCF…EICAEAIQKF (78 aa). S2415 carries the O-(pantetheine 4'-phosphoryl)serine modification. The tract at residues 2474-2531 is disordered; sequence KQATASPPEIGREEAQSTSRAGILPTDQDNDNSSDSESQRKSGASSSSGSGTRTPTSI. A compositionally biased stretch (low complexity) spans 2508–2530; the sequence is DSESQRKSGASSSSGSGTRTPTS. The condensation (C) domain stretch occupies residues 2547–2976; the sequence is PMSYAQSRLW…MQIQDGLLND (430 aa). Residues 3000 to 3402 form an adenylation (A) (KR) domain region; that stretch reads FSQRAATDAN…GGLIFMGRLD (403 aa). Residues 3492–3511 form a disordered region; the sequence is GKVDRKALQDKPLPTEPDSS. The Carrier 2 domain maps to 3515 to 3594; sequence EALSLAEGEL…RMATLIDAEK (80 aa). An O-(pantetheine 4'-phosphoryl)serine modification is found at S3554. Residues 3633–3833 form a reductase (RED) domain region; it reads LTGSTGFLGM…RFSVLMKVVP (201 aa).

This sequence in the C-terminal section; belongs to the NRP synthetase family.

Functionally, hybrid PKS-NRPS synthetase; part of the gene cluster 23 that mediates the biosynthesis of a family of 2-pyridones known as leporins. The hybrid PKS-NRPS synthetase lepA and the enoyl reductase lepG are responsible for fusion of phenylalanine with a hexaketide and subsequent release of the stable tetramic acid precursor, pre-leporin C. Because lepA lacks a designated enoylreductase (ER) domain, the required activity is provided the enoyl reductase lepG. It is possible that the dehydrogenase lepF also participates in production of pre-leporin C. Cytochrome P450 monooxygenase lepH is then required for the ring expansion step to yield leporin C. Leporin C is then presumably further oxidized by the N-hydroxylase lepD to form leporin B. LepI may possess a function in biosynthesis upstream of lepA. Leporin B is further oxidized in the presence of ferric ion to give the leporin B trimer-iron chelate, but whether or not this reaction is catalyzed by an enzyme in the pathway or by ferric ion is not determined yet. This chain is Hybrid PKS-NRPS synthetase lepA, found in Aspergillus flavus (strain ATCC 200026 / FGSC A1120 / IAM 13836 / NRRL 3357 / JCM 12722 / SRRC 167).